Consider the following 163-residue polypeptide: Ribosome maturation factor RimP (163 aa).

Belongs to the RimP family.

It is found in the cytoplasm. Functionally, required for maturation of 30S ribosomal subunits. This chain is Ribosome maturation factor RimP, found in Polynucleobacter necessarius subsp. necessarius (strain STIR1).